We begin with the raw amino-acid sequence, 446 residues long: NADH-ubiquinone oxidoreductase chain 4 (446 aa).

Transmembrane regions (helical) follow at residues 4–24 (IILF…YWMV), 56–76 (MLSY…LLAS), 93–113 (IVIL…FMFY), 114–134 (LFFE…GYQP), 141–161 (VYLL…IFYV), 182–202 (LLYF…LVHL), 212–232 (PVSG…YGLL), 245–265 (YSFV…LVCL), 272–292 (ALIA…LLTM), 297–317 (LCGS…LFCL), 330–350 (MLIN…WFLL), 373–393 (IVSW…FSAA), and 426–446 (LLHW…ILWL).

The protein belongs to the complex I subunit 4 family.

It localises to the mitochondrion membrane. It carries out the reaction a ubiquinone + NADH + 5 H(+)(in) = a ubiquinol + NAD(+) + 4 H(+)(out). Functionally, core subunit of the mitochondrial membrane respiratory chain NADH dehydrogenase (Complex I) that is believed to belong to the minimal assembly required for catalysis. Complex I functions in the transfer of electrons from NADH to the respiratory chain. The immediate electron acceptor for the enzyme is believed to be ubiquinone. This is NADH-ubiquinone oxidoreductase chain 4 (mt:ND4) from Drosophila yakuba (Fruit fly).